Consider the following 92-residue polypeptide: Small ribosomal subunit protein bS20 (92 aa).

Positions 1-23 (MANSPSAKKRAKQAEKRRSHNAS) are disordered. Basic residues predominate over residues 7 to 20 (AKKRAKQAEKRRSH).

It belongs to the bacterial ribosomal protein bS20 family.

Functionally, binds directly to 16S ribosomal RNA. The sequence is that of Small ribosomal subunit protein bS20 from Pseudomonas fluorescens (strain ATCC BAA-477 / NRRL B-23932 / Pf-5).